Here is a 263-residue protein sequence, read N- to C-terminus: S-acyl fatty acid synthase thioesterase, medium chain (263 aa).

M1 carries the N-acetylmethionine modification. Catalysis depends on residues S101 and H237. The important for interaction with FASN stretch occupies residues 262–263 (LT).

It belongs to the thioesterase family. As to quaternary structure, interacts (via C-terminus) with FASN.

The protein localises to the cytoplasm. The protein resides in the cytosol. It catalyses the reaction (9Z)-octadecenoyl-[ACP] + H2O = (9Z)-octadecenoate + holo-[ACP] + H(+). The catalysed reaction is decanoyl-CoA + H2O = decanoate + CoA + H(+). The enzyme catalyses dodecanoyl-CoA + H2O = dodecanoate + CoA + H(+). It carries out the reaction tetradecanoyl-CoA + H2O = tetradecanoate + CoA + H(+). It catalyses the reaction hexadecanoyl-CoA + H2O = hexadecanoate + CoA + H(+). In terms of biological role, contributes to the release of free fatty acids from fatty acid synthase (FASN). Has broad substrate specificity, giving rise to a range of free fatty acids with chain lengths between 10 and 16 carbon atoms (C10 - C16). The polypeptide is S-acyl fatty acid synthase thioesterase, medium chain (Rattus norvegicus (Rat)).